Consider the following 161-residue polypeptide: S-ribosylhomocysteine lyase (161 aa).

Fe cation is bound by residues histidine 57, histidine 61, and cysteine 127.

It belongs to the LuxS family. As to quaternary structure, homodimer. It depends on Fe cation as a cofactor.

It catalyses the reaction S-(5-deoxy-D-ribos-5-yl)-L-homocysteine = (S)-4,5-dihydroxypentane-2,3-dione + L-homocysteine. Functionally, involved in the synthesis of autoinducer 2 (AI-2) which is secreted by bacteria and is used to communicate both the cell density and the metabolic potential of the environment. The regulation of gene expression in response to changes in cell density is called quorum sensing. Catalyzes the transformation of S-ribosylhomocysteine (RHC) to homocysteine (HC) and 4,5-dihydroxy-2,3-pentadione (DPD). The polypeptide is S-ribosylhomocysteine lyase (Streptococcus equi subsp. zooepidemicus (strain H70)).